The chain runs to 183 residues: D-glycero-alpha-D-manno-heptose-1,7-bisphosphate 7-phosphatase (183 aa).

Positions 93, 95, 108, and 110 each coordinate Zn(2+).

It belongs to the GmhB family.

It localises to the cytoplasm. The enzyme catalyses D-glycero-alpha-D-manno-heptose 1,7-bisphosphate + H2O = D-glycero-alpha-D-manno-heptose 1-phosphate + phosphate. It functions in the pathway nucleotide-sugar biosynthesis; GDP-D-glycero-alpha-D-manno-heptose biosynthesis; GDP-D-glycero-alpha-D-manno-heptose from D-glycero-alpha-D-manno-heptose 7-phosphate: step 2/3. In terms of biological role, converts the D-glycero-alpha-D-manno-heptose 1,7-bisphosphate intermediate into D-glycero-alpha-D-manno-heptose 1-phosphate by removing the phosphate group at the C-7 position. The protein is D-glycero-alpha-D-manno-heptose-1,7-bisphosphate 7-phosphatase (gmhB2) of Photorhabdus laumondii subsp. laumondii (strain DSM 15139 / CIP 105565 / TT01) (Photorhabdus luminescens subsp. laumondii).